We begin with the raw amino-acid sequence, 1564 residues long: Abnormal spindle-like microcephaly-associated protein homolog (1564 aa).

IQ domains follow at residues 31–60 (YLWA…MLKS), 220–251 (LKKN…VIIQ), 270–299 (TRSA…SVIK), 293–322 (ILTS…ATIK), 366–395 (MRES…AVIS), 389–420 (QRKA…IIIQ), 439–468 (VKKA…AAVK), 462–491 (QSVA…SIIK), 512–541 (AKAA…AAMK), 535–566 (EHQA…LVIQ), 608–639 (QHTC…LLIQ), 658–687 (TKAA…AAIT), 681–712 (CNTA…IIIQ), 731–762 (LKKT…TFIK), 754–785 (MHRA…IVIQ), 804–835 (ILKA…TLIQ), 827–856 (LRIA…ITRT), 877–908 (LRHS…TLIQ), 900–931 (MHIA…IWIQ), 949–980 (LQNA…AFIQ), 972–1003 (MHRA…VVIQ), 1022–1053 (QRYS…ILIQ), 1045–1076 (MYFS…IFIQ), 1095–1126 (LRKA…VLIQ), 1168–1199 (QWHS…IIIQ), 1304–1333 (HTQA…AATR), 1327–1358 (MHLA…VIIQ), 1377–1406 (VQKS…EKMA), 1452–1483 (QSRA…RIQS), 1474–1503 (QKCA…QKRA), and 1500–1531 (QKRA…VVLQ).

Its subcellular location is the cytoplasm. The protein resides in the nucleus. Its function is as follows. Probable role in mitotic spindle regulation and coordination of mitotic processes. May have a preferential role in regulating neurogenesis. In Ateles geoffroyi (Black-handed spider monkey), this protein is Abnormal spindle-like microcephaly-associated protein homolog (ASPM).